Consider the following 338-residue polypeptide: MAKLIIPSDYDPKMTIRETEKAIRYIRETFQTEFGTAMNLERISAPMFVKKSSGLNDNLSGWEKPVSFTLHDGNEGELQIVHSLAKWKRWALKHYGFSHGEGLFTNMNAIRKDEEVLDNLHSVYVDQWDWEKVIDKSERTEATLRQTVQRIFETIKGMEYHVRALYPQAAYHLPEEISFVTSEELEARWPSLTPSEREDKICQEKGAVFLEHIGGALPLSKKPHDLRAPDYDDWTLNGDLLFWYEPLQRAFEVSSMGIRVDEDRLQEQLKLAGAEDRLDLPFHQALLKGDLPYSIGGGIGQSRLCMLLLGKAHIGEVQASIWPDEIVEKCQAAKIQLL.

The protein belongs to the class-II aminoacyl-tRNA synthetase family. AsnA subfamily.

The protein resides in the cytoplasm. The enzyme catalyses L-aspartate + NH4(+) + ATP = L-asparagine + AMP + diphosphate + H(+). Its pathway is amino-acid biosynthesis; L-asparagine biosynthesis; L-asparagine from L-aspartate (ammonia route): step 1/1. The polypeptide is Aspartate--ammonia ligase (Lactobacillus delbrueckii subsp. bulgaricus (strain ATCC BAA-365 / Lb-18)).